The chain runs to 471 residues: POU domain protein 2 (471 aa).

A compositionally biased stretch (acidic residues) spans 1-18 (CGKSYEEEEEEEDDELEA). 2 disordered regions span residues 1-32 (CGKSYEEEEEEEDDELEADVAQNLSSKRSARQ) and 149-238 (DQQL…PKPL). Over residues 165–180 (STPLSKSPLRSPSLSP) the composition is skewed to low complexity. Positions 186–196 (EPQQAQRTPPN) are enriched in polar residues. Over residues 197–230 (SLAAAGLGLSSAVLTPNTPSMQQQQQQTMTSTTN) the composition is skewed to low complexity. One can recognise a POU-specific domain in the interval 257–331 (EETTDLEELE…LLQKWLEDAD (75 aa)). Positions 362–421 (RRKKRTSIETTIRGALEQAFVLNCKPTSEEINQLSERLHMDKEVVRVWFCNRRQKEKRIN) form a DNA-binding region, homeobox.

Belongs to the POU transcription factor family. Class-2 subfamily.

It localises to the nucleus. Functionally, DNA-binding regulatory protein implicated in early development. Involved in neuronal cell fate decision. May act as an octamer-dependent activator of transcription. The chain is POU domain protein 2 (pdm2) from Drosophila virilis (Fruit fly).